We begin with the raw amino-acid sequence, 369 residues long: Flagellar P-ring protein (369 aa).

The signal sequence occupies residues 1 to 23 (MIKQFAVSLLLVLLTLVTTTASA).

The protein belongs to the FlgI family. As to quaternary structure, the basal body constitutes a major portion of the flagellar organelle and consists of four rings (L,P,S, and M) mounted on a central rod.

It localises to the periplasm. The protein localises to the bacterial flagellum basal body. Assembles around the rod to form the L-ring and probably protects the motor/basal body from shearing forces during rotation. The sequence is that of Flagellar P-ring protein from Photorhabdus laumondii subsp. laumondii (strain DSM 15139 / CIP 105565 / TT01) (Photorhabdus luminescens subsp. laumondii).